The primary structure comprises 59 residues: Protein translocase subunit SecE (59 aa).

A helical transmembrane segment spans residues 33-53; the sequence is GAGIALVGLLGFIIFAVMTFV.

It belongs to the SecE/SEC61-gamma family. Component of the Sec protein translocase complex. Heterotrimer consisting of SecY (alpha), SecG (beta) and SecE (gamma) subunits. The heterotrimers can form oligomers, although 1 heterotrimer is thought to be able to translocate proteins. Interacts with the ribosome. May interact with SecDF, and other proteins may be involved.

Its subcellular location is the cell membrane. Its function is as follows. Essential subunit of the Sec protein translocation channel SecYEG. Clamps together the 2 halves of SecY. May contact the channel plug during translocation. This Haloarcula marismortui (strain ATCC 43049 / DSM 3752 / JCM 8966 / VKM B-1809) (Halobacterium marismortui) protein is Protein translocase subunit SecE.